The following is a 118-amino-acid chain: C-type natriuretic peptide 2 (118 aa).

Residues 1-22 (MHFCHIVGWGLVLAVLYLRTEA) form the signal peptide. The propeptide occupies 23-96 (KPVAQAHQKS…SRKIKGINKK (74 aa)). Cys-102 and Cys-118 are disulfide-bonded.

It belongs to the natriuretic peptide family.

The protein resides in the secreted. In terms of biological role, exhibits natriuretic and vasodepressor activity. Has a cGMP-stimulating activity. This chain is C-type natriuretic peptide 2, found in Aquarana catesbeiana (American bullfrog).